The primary structure comprises 174 residues: UPF0113 protein APE_0516.1 (174 aa).

This sequence belongs to the UPF0113 family.

This Aeropyrum pernix (strain ATCC 700893 / DSM 11879 / JCM 9820 / NBRC 100138 / K1) protein is UPF0113 protein APE_0516.1.